We begin with the raw amino-acid sequence, 230 residues long: Large ribosomal subunit protein uL1 (230 aa).

The protein belongs to the universal ribosomal protein uL1 family. Part of the 50S ribosomal subunit.

Functionally, binds directly to 23S rRNA. The L1 stalk is quite mobile in the ribosome, and is involved in E site tRNA release. Protein L1 is also a translational repressor protein, it controls the translation of the L11 operon by binding to its mRNA. This is Large ribosomal subunit protein uL1 from Erythrobacter litoralis (strain HTCC2594).